The sequence spans 362 residues: Heat-inducible transcription repressor HrcA (362 aa).

The protein belongs to the HrcA family.

Its function is as follows. Negative regulator of class I heat shock genes (grpE-dnaK-dnaJ and groELS operons). Prevents heat-shock induction of these operons. The polypeptide is Heat-inducible transcription repressor HrcA (Rhizobium rhizogenes (strain K84 / ATCC BAA-868) (Agrobacterium radiobacter)).